The following is a 312-amino-acid chain: Serine protease 48 (312 aa).

A signal peptide spans 1–22 (MGPAGLKVLLLLFLGAFQGSFT). Residues 40–276 (IVGGQDAALG…YQKWISAIIS (237 aa)) enclose the Peptidase S1 domain. C65 and C81 are disulfide-bonded. Active-site charge relay system residues include H80 and D126. N-linked (GlcNAc...) asparagine glycosylation is present at N149. 3 disulfides stabilise this stretch: C160–C235, C190–C214, and C225–C253. S229 serves as the catalytic Charge relay system. A glycan (N-linked (GlcNAc...) asparagine) is linked at N263.

The protein belongs to the peptidase S1 family.

The protein localises to the secreted. This Mus musculus (Mouse) protein is Serine protease 48 (Prss48).